A 322-amino-acid chain; its full sequence is ATP-dependent 6-phosphofructokinase (322 aa).

Residue Gly-11 participates in ATP binding. 21-25 (RAVTR) contacts ADP. Residues 72-73 (RC) and 102-105 (GDGS) contribute to the ATP site. Residue Asp-103 coordinates Mg(2+). Residue 127-129 (TID) participates in substrate binding. Asp-129 acts as the Proton acceptor in catalysis. Arg-156 is a binding site for ADP. Substrate contacts are provided by residues Arg-164 and 171 to 173 (MGR). ADP is bound by residues 187–189 (GAE), Arg-213, and 215–217 (KKH). Substrate-binding positions include Glu-224, Arg-245, and 251-254 (HIQR).

This sequence belongs to the phosphofructokinase type A (PFKA) family. ATP-dependent PFK group I subfamily. Prokaryotic clade 'B1' sub-subfamily. In terms of assembly, homotetramer. Mg(2+) is required as a cofactor.

Its subcellular location is the cytoplasm. The enzyme catalyses beta-D-fructose 6-phosphate + ATP = beta-D-fructose 1,6-bisphosphate + ADP + H(+). It functions in the pathway carbohydrate degradation; glycolysis; D-glyceraldehyde 3-phosphate and glycerone phosphate from D-glucose: step 3/4. Allosterically activated by ADP and other diphosphonucleosides, and allosterically inhibited by phosphoenolpyruvate. In terms of biological role, catalyzes the phosphorylation of D-fructose 6-phosphate to fructose 1,6-bisphosphate by ATP, the first committing step of glycolysis. This Staphylococcus epidermidis (strain ATCC 35984 / DSM 28319 / BCRC 17069 / CCUG 31568 / BM 3577 / RP62A) protein is ATP-dependent 6-phosphofructokinase.